Reading from the N-terminus, the 556-residue chain is Putative D-arabinono-1,4-lactone oxidase (556 aa).

Positions 47–217 (FTSLPELYIQ…TEVTFKAVPA (171 aa)) constitute an FAD-binding PCMH-type domain. Residue H84 is modified to Pros-8alpha-FAD histidine.

The protein belongs to the oxygen-dependent FAD-linked oxidoreductase family. Requires FAD as cofactor.

It is found in the mitochondrion membrane. The enzyme catalyses D-arabinono-1,4-lactone + O2 = dehydro-D-arabinono-1,4-lactone + H2O2 + H(+). Its pathway is cofactor biosynthesis; D-erythroascorbate biosynthesis; dehydro-D-arabinono-1,4-lactone from D-arabinose: step 2/2. The protein is Putative D-arabinono-1,4-lactone oxidase (alo-1) of Neurospora crassa (strain ATCC 24698 / 74-OR23-1A / CBS 708.71 / DSM 1257 / FGSC 987).